The sequence spans 429 residues: Glutamate-1-semialdehyde 2,1-aminomutase (429 aa).

Residue K265 is modified to N6-(pyridoxal phosphate)lysine.

Belongs to the class-III pyridoxal-phosphate-dependent aminotransferase family. HemL subfamily. As to quaternary structure, homodimer. Requires pyridoxal 5'-phosphate as cofactor.

It is found in the cytoplasm. The enzyme catalyses (S)-4-amino-5-oxopentanoate = 5-aminolevulinate. The protein operates within porphyrin-containing compound metabolism; protoporphyrin-IX biosynthesis; 5-aminolevulinate from L-glutamyl-tRNA(Glu): step 2/2. The sequence is that of Glutamate-1-semialdehyde 2,1-aminomutase from Alkalilimnicola ehrlichii (strain ATCC BAA-1101 / DSM 17681 / MLHE-1).